Here is a 479-residue protein sequence, read N- to C-terminus: Probable acyl-CoA desaturase (479 aa).

A compositionally biased stretch (low complexity) spans Met1–Thr18. The tract at residues Met1–Thr28 is disordered. The Cytoplasmic portion of the chain corresponds to Met1–His61. Residues Leu62–Phe82 traverse the membrane as a helical segment. Over Thr83 to Lys89 the chain is Lumenal. Residues Thr90–His110 form a helical membrane-spanning segment. Fe cation contacts are provided by His110, His115, His147, His150, and His151. The short motif at His110 to His115 is the Histidine box-1 element. The Cytoplasmic segment spans residues Arg111–His204. A Histidine box-2 motif is present at residues His147–His151. A helical transmembrane segment spans residues Phe205–Trp225. At Gly226 to Arg229 the chain is on the lumenal side. The chain crosses the membrane as a helical span at residues Gly230–Val250. At Asn251–Asn479 the chain is on the cytoplasmic side. The Fe cation site is built by His255, His284, His287, and His288. The Histidine box-3 motif lies at His284–His288. In terms of domain architecture, Cytochrome b5 heme-binding spans Gln357 to Arg433. 2 residues coordinate heme: His390 and His416.

It belongs to the fatty acid desaturase type 1 family. Fe(2+) serves as cofactor.

It localises to the membrane. It catalyses the reaction octadecanoyl-CoA + 2 Fe(II)-[cytochrome b5] + O2 + 2 H(+) = (9Z)-octadecenoyl-CoA + 2 Fe(III)-[cytochrome b5] + 2 H2O. Its function is as follows. Stearoyl-CoA desaturase that utilizes O(2) and electrons from reduced cytochrome b5 to introduce the first double bond into saturated fatty acyl-CoA substrates. Catalyzes the insertion of a cis double bond at the delta-9 position into fatty acyl-CoA substrates including palmitoyl-CoA and stearoyl-CoA. Contributes to the biosynthesis of membrane phospholipids, cholesterol esters and triglycerides. The chain is Probable acyl-CoA desaturase from Schizosaccharomyces pombe (strain 972 / ATCC 24843) (Fission yeast).